The chain runs to 282 residues: Proteasome subunit beta (282 aa).

The propeptide at 1–55 is removed in mature form; by autocatalysis; sequence MDNSSTGRYPAASLPPAYLRPGSSSFTDFLRAQAPELLPTARSFPEGSVVQAAHG. Residue Thr56 is the Nucleophile of the active site.

It belongs to the peptidase T1B family. As to quaternary structure, the 20S proteasome core is composed of 14 alpha and 14 beta subunits that assemble into four stacked heptameric rings, resulting in a barrel-shaped structure. The two inner rings, each composed of seven catalytic beta subunits, are sandwiched by two outer rings, each composed of seven alpha subunits. The catalytic chamber with the active sites is on the inside of the barrel. Has a gated structure, the ends of the cylinder being occluded by the N-termini of the alpha-subunits. Is capped by the proteasome-associated ATPase, ARC.

Its subcellular location is the cytoplasm. The catalysed reaction is Cleavage of peptide bonds with very broad specificity.. Its pathway is protein degradation; proteasomal Pup-dependent pathway. The formation of the proteasomal ATPase ARC-20S proteasome complex, likely via the docking of the C-termini of ARC into the intersubunit pockets in the alpha-rings, may trigger opening of the gate for substrate entry. Interconversion between the open-gate and close-gate conformations leads to a dynamic regulation of the 20S proteasome proteolysis activity. Component of the proteasome core, a large protease complex with broad specificity involved in protein degradation. The sequence is that of Proteasome subunit beta from Actinosynnema mirum (strain ATCC 29888 / DSM 43827 / JCM 3225 / NBRC 14064 / NCIMB 13271 / NRRL B-12336 / IMRU 3971 / 101).